We begin with the raw amino-acid sequence, 527 residues long: MKRDFLGRTLAVIEDLSVEEQMFLYEKTRELKQRWYSGEDVSDFRIKKRNVGIYIVFVEPSTRTKESFINAAKFHSGPNVKVNVFDSEHSSFNKQESYTDTFSMLTGYSDYSIFVVRTRLEGVCRLLERRISEFASRNGIEVPSFINAGDGKHEHPTQELLDEYTFLEQNGFDNSFIHVALVGDLLHGRTVHSKVNGLKIFKNVKVDLVAPEELMMPEHYVEKMKKNGFEVRIFSSIREYLDQKDVAKIWYFTRLQLERMGEDILEKVHVLREAVTFKKEYLDALPEGVKFYHPLPRHKVYPTIPNFLDTLPLNGWETQARNGYWVRIVLLSMFGGALEAPFDTSKKEEKPEEDFIIPAPITHGSKGVQKEGKRGIKPIENGTVIDHIAKGKTPEEIYSTILKIRKILRLYDVDSADGIFRSSDGSFKGYISLPDRYLSKKEIKKLSAISPNTTVNIIKNSTVVEKYRIKLPPTIYGFEELRCKNENCITNPAHGENASPSFVRNEKGQFICEYCETPHSFEEIWSI.

The aspartate carbamoyltransferase stretch occupies residues 1–342 (MKRDFLGRTL…MFGGALEAPF (342 aa)). The tract at residues 343-357 (DTSKKEEKPEEDFII) is linker. Residues 368 to 527 (VQKEGKRGIK…PHSFEEIWSI (160 aa)) form an aspartate carbamoyltransferase regulatory region region. Zn(2+)-binding residues include Cys483, Cys488, Cys512, and Cys515.

The protein in the N-terminal section; belongs to the aspartate/ornithine carbamoyltransferase superfamily. ATCase family. In the C-terminal section; belongs to the PyrI family.

It carries out the reaction carbamoyl phosphate + L-aspartate = N-carbamoyl-L-aspartate + phosphate + H(+). It functions in the pathway pyrimidine metabolism; UMP biosynthesis via de novo pathway; (S)-dihydroorotate from bicarbonate: step 2/3. This Thermotoga maritima (strain ATCC 43589 / DSM 3109 / JCM 10099 / NBRC 100826 / MSB8) protein is Protein PyrBI (pyrBI).